Here is a 372-residue protein sequence, read N- to C-terminus: 4-hydroxy-3-methylbut-2-en-1-yl diphosphate synthase (flavodoxin) (372 aa).

[4Fe-4S] cluster is bound by residues Cys-270, Cys-273, Cys-305, and Glu-312.

The protein belongs to the IspG family. [4Fe-4S] cluster serves as cofactor.

The enzyme catalyses (2E)-4-hydroxy-3-methylbut-2-enyl diphosphate + oxidized [flavodoxin] + H2O + 2 H(+) = 2-C-methyl-D-erythritol 2,4-cyclic diphosphate + reduced [flavodoxin]. Its pathway is isoprenoid biosynthesis; isopentenyl diphosphate biosynthesis via DXP pathway; isopentenyl diphosphate from 1-deoxy-D-xylulose 5-phosphate: step 5/6. Converts 2C-methyl-D-erythritol 2,4-cyclodiphosphate (ME-2,4cPP) into 1-hydroxy-2-methyl-2-(E)-butenyl 4-diphosphate. This chain is 4-hydroxy-3-methylbut-2-en-1-yl diphosphate synthase (flavodoxin), found in Idiomarina loihiensis (strain ATCC BAA-735 / DSM 15497 / L2-TR).